A 347-amino-acid polypeptide reads, in one-letter code: Protein RecA (347 aa).

68–75 is a binding site for ATP; it reads GPESSGKT.

Belongs to the RecA family.

The protein localises to the cytoplasm. Can catalyze the hydrolysis of ATP in the presence of single-stranded DNA, the ATP-dependent uptake of single-stranded DNA by duplex DNA, and the ATP-dependent hybridization of homologous single-stranded DNAs. It interacts with LexA causing its activation and leading to its autocatalytic cleavage. The sequence is that of Protein RecA from Mycobacterium sp. (strain JLS).